The primary structure comprises 528 residues: Protein phosphatase 1 regulatory subunit 16A (528 aa).

Residues 18-45 (STQERLKHAQKRRAQQVKMWAQAEKEAQ) are a coiled coil. Positions 19–59 (TQERLKHAQKRRAQQVKMWAQAEKEAQGKKGPGERPRKEAA) are disordered. Residues 40–58 (AEKEAQGKKGPGERPRKEA) are compositionally biased toward basic and acidic residues. ANK repeat units follow at residues 70-99 (PPSV…SPDL), 103-132 (DGLT…NINA), 136-165 (ECWT…NLLA), 231-260 (HGAT…SLSA), and 264-293 (DGWE…DLNA). 2 disordered regions span residues 330 to 351 (RQRS…VVRR) and 367 to 421 (QEAI…SPVR). Phosphoserine is present on Ser-433. Residues 462 to 505 (QRAAAKLQRPPPEGPESPETAEPGLPGDTVTPQPDCGFRAGGDP) form a disordered region. A lipid anchor (S-palmitoyl cysteine) is attached at Cys-524. Cys-525 is modified (cysteine methyl ester). Cys-525 carries the S-farnesyl cysteine lipid modification. Residues 526–528 (LLM) constitute a propeptide, removed in mature form.

In terms of assembly, binds PP1.

It localises to the cell membrane. Its function is as follows. Inhibits protein phosphatase 1 activity toward phosphorylase, myosin light chain and myosin substrates. In Homo sapiens (Human), this protein is Protein phosphatase 1 regulatory subunit 16A (PPP1R16A).